A 126-amino-acid polypeptide reads, in one-letter code: Glycine cleavage system H protein (126 aa).

Positions 22 to 103 (KAYIGITDYA…PYGSWMALVE (82 aa)) constitute a Lipoyl-binding domain. N6-lipoyllysine is present on Lys63.

Belongs to the GcvH family. As to quaternary structure, the glycine cleavage system is composed of four proteins: P, T, L and H. The cofactor is (R)-lipoate.

The glycine cleavage system catalyzes the degradation of glycine. The H protein shuttles the methylamine group of glycine from the P protein to the T protein. In Thermoanaerobacter pseudethanolicus (strain ATCC 33223 / 39E) (Clostridium thermohydrosulfuricum), this protein is Glycine cleavage system H protein.